Consider the following 205-residue polypeptide: Small ribosomal subunit protein uS4 (205 aa).

A compositionally biased stretch (basic and acidic residues) spans 1-16 (MSKRESAKHKIDRRLG). The disordered stretch occupies residues 1-46 (MSKRESAKHKIDRRLGENIWGRPKSPVNRREYGPGQHGQRRKGKLS). The S4 RNA-binding domain maps to 94-157 (SRLDAVVYRA…KQLAIVLEAV (64 aa)).

Belongs to the universal ribosomal protein uS4 family. Part of the 30S ribosomal subunit. Contacts protein S5. The interaction surface between S4 and S5 is involved in control of translational fidelity.

In terms of biological role, one of the primary rRNA binding proteins, it binds directly to 16S rRNA where it nucleates assembly of the body of the 30S subunit. Its function is as follows. With S5 and S12 plays an important role in translational accuracy. In Brucella abortus (strain S19), this protein is Small ribosomal subunit protein uS4.